We begin with the raw amino-acid sequence, 324 residues long: Tumor necrosis factor receptor superfamily member 6 (324 aa).

The N-terminal stretch at 1–21 (MLWIMAVLPLVLAGPELNVRM) is a signal peptide. Residues 22 to 171 (QGTDSIFEGL…CKKQSSNYKL (150 aa)) are Extracellular-facing. N43 carries an N-linked (GlcNAc...) asparagine glycan. TNFR-Cys repeat units follow at residues 43 to 79 (NCSE…PTCH), 80 to 123 (PCTE…NTKC), and 124 to 163 (RCKE…TKCK). 9 cysteine pairs are disulfide-bonded: C44–C55, C56–C69, C59–C78, C81–C97, C100–C115, C103–C123, C125–C139, C142–C154, and C145–C162. N114 and N132 each carry an N-linked (GlcNAc...) asparagine glycan. A helical transmembrane segment spans residues 172-188 (LWLLILPGLAILFVFIY). The Cytoplasmic segment spans residues 189–324 (KRYRKRQPGD…RNENEGQSLE (136 aa)). The interaction with HIPK3 stretch occupies residues 201 to 306 (SGIPSPESVP…EEIQAMVWED (106 aa)). S214 bears the Phosphoserine mark. An interaction with CALM region spans residues 219 to 243 (NKYIWRTAEKMKICDAKKFARQHKI). In terms of domain architecture, Death spans 219–303 (NKYIWRTAEK…DIAEEIQAMV (85 aa)).

Component of the death-induced signaling complex (DISC) composed of cell surface receptor FAS/CD95, adapter protein FADD and the CASP8 protease; recruitment of CASP8 to the complex is required for processing of CASP8 into the p18 and p10 subunits. Interacts directly (via DED domain) with NOL3 (via CARD domain); inhibits death-inducing signaling complex (DISC) assembly by inhibiting the increase in FAS-FADD binding induced by FAS activation. Binds DAXX. Interacts with HIPK3. Part of a complex containing HIPK3 and FADD. Binds RIPK1 and FAIM2. Interacts with BABAM2 and FEM1B. Interacts with CALM. In the absence of stimulation, interacts with BIRC2, DDX3X and GSK3B. The interaction with BIRC2 and DDX3X is further enhanced upon receptor stimulation and accompanied by DDX3X and BIRC2 cleavage. In terms of processing, palmitoylated. Palmitoylation by ZDHHC7 prevents the lysosomal degradation of FAS regulating its expression at the plasma membrane.

It localises to the cell membrane. Its subcellular location is the membrane raft. In terms of biological role, receptor for TNFSF6/FASLG. The adapter molecule FADD recruits caspase CASP8 to the activated receptor. The resulting death-inducing signaling complex (DISC) performs CASP8 proteolytic activation which initiates the subsequent cascade of caspases (aspartate-specific cysteine proteases) mediating apoptosis. FAS-mediated apoptosis may have a role in the induction of peripheral tolerance, in the antigen-stimulated suicide of mature T-cells, or both. The protein is Tumor necrosis factor receptor superfamily member 6 (Fas) of Rattus norvegicus (Rat).